Here is a 443-residue protein sequence, read N- to C-terminus: ATP-dependent protease ATPase subunit HslU (443 aa).

ATP-binding positions include Ile-19, Gly-61–Glu-66, Asp-256, Glu-321, and Arg-393.

The protein belongs to the ClpX chaperone family. HslU subfamily. In terms of assembly, a double ring-shaped homohexamer of HslV is capped on each side by a ring-shaped HslU homohexamer. The assembly of the HslU/HslV complex is dependent on binding of ATP.

The protein resides in the cytoplasm. ATPase subunit of a proteasome-like degradation complex; this subunit has chaperone activity. The binding of ATP and its subsequent hydrolysis by HslU are essential for unfolding of protein substrates subsequently hydrolyzed by HslV. HslU recognizes the N-terminal part of its protein substrates and unfolds these before they are guided to HslV for hydrolysis. The chain is ATP-dependent protease ATPase subunit HslU from Ralstonia pickettii (strain 12J).